A 149-amino-acid chain; its full sequence is Large ribosomal subunit protein bL20m (149 aa).

Residues 1-9 (MVFLTAQLW) constitute a mitochondrion transit peptide.

Belongs to the bacterial ribosomal protein bL20 family. As to quaternary structure, component of the mitochondrial large ribosomal subunit (mt-LSU). Mature mammalian 55S mitochondrial ribosomes consist of a small (28S) and a large (39S) subunit. The 28S small subunit contains a 12S ribosomal RNA (12S mt-rRNA) and 30 different proteins. The 39S large subunit contains a 16S rRNA (16S mt-rRNA), a copy of mitochondrial valine transfer RNA (mt-tRNA(Val)), which plays an integral structural role, and 52 different proteins. Interacts with OXA1L.

It localises to the mitochondrion. The chain is Large ribosomal subunit protein bL20m (MRPL20) from Homo sapiens (Human).